Reading from the N-terminus, the 364-residue chain is Aminomethyltransferase (364 aa).

The protein belongs to the GcvT family. As to quaternary structure, the glycine cleavage system is composed of four proteins: P, T, L and H.

The catalysed reaction is N(6)-[(R)-S(8)-aminomethyldihydrolipoyl]-L-lysyl-[protein] + (6S)-5,6,7,8-tetrahydrofolate = N(6)-[(R)-dihydrolipoyl]-L-lysyl-[protein] + (6R)-5,10-methylene-5,6,7,8-tetrahydrofolate + NH4(+). The glycine cleavage system catalyzes the degradation of glycine. The polypeptide is Aminomethyltransferase (Escherichia coli O81 (strain ED1a)).